The chain runs to 356 residues: Vanillin synthase, chloroplastic (356 aa).

N-linked (GlcNAc...) asparagine glycosylation occurs at N122. Disulfide bonds link C159-C202 and C193-C235. C162 is a catalytic residue. N251 is a glycosylation site (N-linked (GlcNAc...) asparagine). An intrachain disulfide couples C293 to C343. Active-site residues include H302 and N322.

Belongs to the peptidase C1 family. As to quaternary structure, forms homodimers, homotrimers and homotetramers. As to expression, accumulates in the inner part of vanilla pods (at protein level). Expressed in single cells located a few cell layers from the inner epidermis.

It is found in the plastid. The protein resides in the chloroplast. It catalyses the reaction (E)-ferulate + H2O = vanillin + acetate. The enzyme catalyses 4-O-beta-D-glucosyl-trans-ferulate + H2O = 4-O-beta-D-glucosyl-vanillin + acetate. The protein operates within aromatic compound metabolism; phenylpropanoid biosynthesis. In terms of biological role, involved in the biosynthesis of vanillin (4-hydroxy-3-methoxy-benzaldehyde) and derivative natural products, key components of vanilla pods flavor. Catalyzes the double carbon bond cleavage of ferulic acid to vanillin and of their respective glucosides via a coupled non-oxidative hydratase/lyase reaction. Inactive toward p-coumaric acid, caffeic acid and their glucosides derivatives. This chain is Vanillin synthase, chloroplastic, found in Vanilla planifolia (Vanilla).